A 44-amino-acid polypeptide reads, in one-letter code: Photosystem I reaction center subunit IX (44 aa).

A helical transmembrane segment spans residues 7–27 (YLSVAPVISTLWFGSLAGLLI).

Belongs to the PsaJ family.

Its subcellular location is the plastid. The protein localises to the chloroplast thylakoid membrane. Its function is as follows. May help in the organization of the PsaE and PsaF subunits. In Ceratophyllum demersum (Rigid hornwort), this protein is Photosystem I reaction center subunit IX.